The chain runs to 261 residues: uncharacterized protein (261 aa).

Glu-46 is a catalytic residue.

Belongs to the PhzF family.

This is an uncharacterized protein from Pseudomonas aeruginosa (strain ATCC 15692 / DSM 22644 / CIP 104116 / JCM 14847 / LMG 12228 / 1C / PRS 101 / PAO1).